The sequence spans 775 residues: Venom dipeptidyl peptidase 4 (775 aa).

The N-terminal stretch at 1-23 (MEVLVQLALLLVVHGSLVVLVAG) is a signal peptide. N-linked (GlcNAc...) asparagine glycans are attached at residues Asn-68 and Asn-239. 2 disulfides stabilise this stretch: Cys-450-Cys-453 and Cys-463-Cys-481. N-linked (GlcNAc...) asparagine glycosylation is found at Asn-473, Asn-505, Asn-578, and Asn-631. The active-site Charge relay system is Ser-639. A disulfide bond links Cys-659 and Cys-770. N-linked (GlcNAc...) asparagine glycosylation is found at Asn-689 and Asn-694. Residues Asp-718 and His-750 each act as charge relay system in the active site.

It belongs to the peptidase S9B family. DPPIV subfamily. As to expression, expressed by the venom duct.

It localises to the secreted. It catalyses the reaction Release of an N-terminal dipeptide, Xaa-Yaa-|-Zaa-, from a polypeptide, preferentially when Yaa is Pro, provided Zaa is neither Pro nor hydroxyproline.. Inhibited by diprotin A. Functionally, venom dipeptidyl-peptidase which removes N-terminal dipeptides sequentially from polypeptides having unsubstituted N-termini provided that the penultimate residue is proline. May process promelittin into its active form and/or modulate the chemotactic activity of immune cells after the insect sting. This is Venom dipeptidyl peptidase 4 from Apis mellifera (Honeybee).